The following is a 149-amino-acid chain: D-aminoacyl-tRNA deacylase (149 aa).

A Gly-cisPro motif, important for rejection of L-amino acids motif is present at residues 137 to 138 (GP).

It belongs to the DTD family. In terms of assembly, homodimer.

The protein resides in the cytoplasm. The enzyme catalyses glycyl-tRNA(Ala) + H2O = tRNA(Ala) + glycine + H(+). The catalysed reaction is a D-aminoacyl-tRNA + H2O = a tRNA + a D-alpha-amino acid + H(+). An aminoacyl-tRNA editing enzyme that deacylates mischarged D-aminoacyl-tRNAs. Also deacylates mischarged glycyl-tRNA(Ala), protecting cells against glycine mischarging by AlaRS. Acts via tRNA-based rather than protein-based catalysis; rejects L-amino acids rather than detecting D-amino acids in the active site. By recycling D-aminoacyl-tRNA to D-amino acids and free tRNA molecules, this enzyme counteracts the toxicity associated with the formation of D-aminoacyl-tRNA entities in vivo and helps enforce protein L-homochirality. This is D-aminoacyl-tRNA deacylase from Caldicellulosiruptor bescii (strain ATCC BAA-1888 / DSM 6725 / KCTC 15123 / Z-1320) (Anaerocellum thermophilum).